Reading from the N-terminus, the 107-residue chain is Nucleoid-associated protein amb4104 (107 aa).

This sequence belongs to the YbaB/EbfC family. Homodimer.

The protein localises to the cytoplasm. Its subcellular location is the nucleoid. Functionally, binds to DNA and alters its conformation. May be involved in regulation of gene expression, nucleoid organization and DNA protection. This Paramagnetospirillum magneticum (strain ATCC 700264 / AMB-1) (Magnetospirillum magneticum) protein is Nucleoid-associated protein amb4104.